The sequence spans 284 residues: RCS-specific HTH-type transcriptional activator RclR (284 aa).

A disulfide bridge links Cys21 with Cys89. Residues 177 to 278 (PRLGAVIQQM…GCTPGEYRER (102 aa)) form the HTH araC/xylS-type domain. 2 DNA-binding regions (H-T-H motif) span residues 197–218 (ESLASIAHMSRASFAQLFRDVS) and 245–268 (VVVIAESVGYASESSFHKAFVREF).

Oxydation of Cys-21 leads to partial activation of RclR, followed by the formation of an intramolecular disulfide bond between Cys-21 and Cys-89, which stabilizes the active form of RclR. Involved in reactive chlorine species (RCS) stress resistance. Up-regulates, in response to hypochlorous acid (HOCl), the expression of three genes essential for survival of RCS stress (rclA, rclB and rclC) and its own expression. The protein is RCS-specific HTH-type transcriptional activator RclR (rclR) of Escherichia coli (strain K12).